We begin with the raw amino-acid sequence, 153 residues long: Methylglyoxal synthase (153 aa).

The 151-residue stretch at Asp-3 to Asn-153 folds into the MGS-like domain. Substrate contacts are provided by residues His-19, Lys-23, Thr-45–Thr-48, and Ser-65–Gly-66. Asp-71 (proton donor/acceptor) is an active-site residue. Residue His-98 participates in substrate binding.

It belongs to the methylglyoxal synthase family.

It carries out the reaction dihydroxyacetone phosphate = methylglyoxal + phosphate. Catalyzes the formation of methylglyoxal from dihydroxyacetone phosphate. This is Methylglyoxal synthase from Hahella chejuensis (strain KCTC 2396).